The following is a 469-amino-acid chain: ATP-dependent protease ATPase subunit HslU (469 aa).

Residues Ile-24, 66 to 71, Asp-282, Glu-347, and Arg-419 contribute to the ATP site; that span reads GVGKTE.

The protein belongs to the ClpX chaperone family. HslU subfamily. In terms of assembly, a double ring-shaped homohexamer of HslV is capped on each side by a ring-shaped HslU homohexamer. The assembly of the HslU/HslV complex is dependent on binding of ATP.

The protein localises to the cytoplasm. Its function is as follows. ATPase subunit of a proteasome-like degradation complex; this subunit has chaperone activity. The binding of ATP and its subsequent hydrolysis by HslU are essential for unfolding of protein substrates subsequently hydrolyzed by HslV. HslU recognizes the N-terminal part of its protein substrates and unfolds these before they are guided to HslV for hydrolysis. This Listeria welshimeri serovar 6b (strain ATCC 35897 / DSM 20650 / CCUG 15529 / CIP 8149 / NCTC 11857 / SLCC 5334 / V8) protein is ATP-dependent protease ATPase subunit HslU.